A 225-amino-acid polypeptide reads, in one-letter code: Phosphatidylserine decarboxylase proenzyme (225 aa).

Ser195 (schiff-base intermediate with substrate; via pyruvic acid) is an active-site residue. Position 195 is a pyruvic acid (Ser); by autocatalysis (Ser195).

This sequence belongs to the phosphatidylserine decarboxylase family. PSD-A subfamily. In terms of assembly, heterodimer of a large membrane-associated beta subunit and a small pyruvoyl-containing alpha subunit. Pyruvate is required as a cofactor. In terms of processing, is synthesized initially as an inactive proenzyme. Formation of the active enzyme involves a self-maturation process in which the active site pyruvoyl group is generated from an internal serine residue via an autocatalytic post-translational modification. Two non-identical subunits are generated from the proenzyme in this reaction, and the pyruvate is formed at the N-terminus of the alpha chain, which is derived from the carboxyl end of the proenzyme. The post-translation cleavage follows an unusual pathway, termed non-hydrolytic serinolysis, in which the side chain hydroxyl group of the serine supplies its oxygen atom to form the C-terminus of the beta chain, while the remainder of the serine residue undergoes an oxidative deamination to produce ammonia and the pyruvoyl prosthetic group on the alpha chain.

Its subcellular location is the cell membrane. The enzyme catalyses a 1,2-diacyl-sn-glycero-3-phospho-L-serine + H(+) = a 1,2-diacyl-sn-glycero-3-phosphoethanolamine + CO2. The protein operates within phospholipid metabolism; phosphatidylethanolamine biosynthesis; phosphatidylethanolamine from CDP-diacylglycerol: step 2/2. In terms of biological role, catalyzes the formation of phosphatidylethanolamine (PtdEtn) from phosphatidylserine (PtdSer). The protein is Phosphatidylserine decarboxylase proenzyme of Gluconobacter oxydans (strain 621H) (Gluconobacter suboxydans).